Consider the following 163-residue polypeptide: MSDKAAGEVKNGNGATAEPSLNILAQYVKDLSFESPGAPLSLRPREKAPSININVNVNANPLSETDFDVVLTLEAKAVDGKDVLFNTELVYGGVFRIQGIPQEHMLPLLFIECPRLLFPFARQIIADATRNGGYPPLMIDPIDFAQMFQQRMAEEQAKSAVKS.

Belongs to the SecB family. Homotetramer, a dimer of dimers. One homotetramer interacts with 1 SecA dimer.

It is found in the cytoplasm. Functionally, one of the proteins required for the normal export of preproteins out of the cell cytoplasm. It is a molecular chaperone that binds to a subset of precursor proteins, maintaining them in a translocation-competent state. It also specifically binds to its receptor SecA. The sequence is that of Protein-export protein SecB from Brucella anthropi (strain ATCC 49188 / DSM 6882 / CCUG 24695 / JCM 21032 / LMG 3331 / NBRC 15819 / NCTC 12168 / Alc 37) (Ochrobactrum anthropi).